The sequence spans 210 residues: Large ribosomal subunit protein uL4 (210 aa).

A disordered region spans residues 44-77 (ARQGNASSKTRSEVRGGGRKPWRQKGTGRARAGS). The segment covering 60–71 (GGRKPWRQKGTG) has biased composition (basic residues).

Belongs to the universal ribosomal protein uL4 family. As to quaternary structure, part of the 50S ribosomal subunit.

In terms of biological role, one of the primary rRNA binding proteins, this protein initially binds near the 5'-end of the 23S rRNA. It is important during the early stages of 50S assembly. It makes multiple contacts with different domains of the 23S rRNA in the assembled 50S subunit and ribosome. Functionally, forms part of the polypeptide exit tunnel. The chain is Large ribosomal subunit protein uL4 from Microcystis aeruginosa (strain NIES-843 / IAM M-2473).